The primary structure comprises 244 residues: Transcription factor A, mitochondrial (244 aa).

A mitochondrion-targeting transit peptide spans 1–42 (MALFRGMWGVLRTLGRTGVEMCAGCGGRIPSPVSLICIPKCF). The segment at residues 49–117 (PKKPMSSYLR…VYKEAVSKYK (69 aa)) is a DNA-binding region (HMG box 1). A phosphoserine; by PKA mark is found at Ser-54, Ser-55, and Ser-60. Position 66 is an N6-succinyllysine (Lys-66). Phosphothreonine is present on Thr-121. A DNA-binding region (HMG box 2) is located at residues 154–218 (PKRPRSAYNI…RYDNEMKSWE (65 aa)). Phosphoserine; by PKA is present on Ser-159. A Phosphoserine modification is found at Ser-192. Positions 221-244 (MAEVGRSDLIRRSVKRPPGDISEN) are disordered.

In terms of assembly, monomer; binds DNA as a monomer. Homodimer. Component of the mitochondrial transcription initiation complex, composed at least of TFB2M, TFAM and POLRMT. In this complex TFAM recruits POLRMT to the promoter whereas TFB2M induces structural changes in POLRMT to enable promoter opening and trapping of the DNA non-template strand. Upon metabolic stress, forms a complex composed of FOXO3, SIRT3, TFAM and POLRMT. Interacts with TFB1M and TFB2M. Interacts with CLPX; this enhances DNA-binding. Post-translationally, phosphorylation by PKA within the HMG box 1 impairs DNA binding and promotes degradation by the AAA+ Lon protease. The mitochondrial isoform is widely expressed while the nuclear isoform is testis-specific.

It is found in the mitochondrion. Its subcellular location is the mitochondrion matrix. The protein localises to the mitochondrion nucleoid. It localises to the nucleus. Its function is as follows. Binds to the mitochondrial light strand promoter and functions in mitochondrial transcription regulation. Component of the mitochondrial transcription initiation complex, composed at least of TFB2M, TFAM and POLRMT that is required for basal transcription of mitochondrial DNA. In this complex, TFAM recruits POLRMT to a specific promoter whereas TFB2M induces structural changes in POLRMT to enable promoter opening and trapping of the DNA non-template strand. Required for accurate and efficient promoter recognition by the mitochondrial RNA polymerase. Promotes transcription initiation from the HSP1 and the light strand promoter by binding immediately upstream of transcriptional start sites. Is able to unwind DNA. Bends the mitochondrial light strand promoter DNA into a U-turn shape via its HMG boxes. Required for maintenance of normal levels of mitochondrial DNA. May play a role in organizing and compacting mitochondrial DNA. May also function as a transcriptional activator or may have a structural role in the compaction of nuclear DNA during spermatogenesis. The chain is Transcription factor A, mitochondrial from Rattus norvegicus (Rat).